The sequence spans 435 residues: Matrix remodeling-associated protein 8 (435 aa).

The N-terminal stretch at 1–22 (MEIRCKVLVCHIILLHSATVYL) is a signal peptide. At 23–337 (YSVPASQQNP…QESRLHFFQQ (315 aa)) the chain is on the extracellular side. 2 consecutive Ig-like V-type domains span residues 32-158 (PESV…LNIT) and 156-293 (NITK…LSVS). Asn41, Asn120, Asn156, Asn245, and Asn324 each carry an N-linked (GlcNAc...) asparagine glycan. Cys54 and Cys138 are disulfide-bonded. A disulfide bridge links Cys187 with Cys273. The helical transmembrane segment at 338-358 (LGYILATLLLFILLLTAVILI) threads the bilayer. At 359-435 (TRKHQKRGYA…DLELRKEYCK (77 aa)) the chain is on the cytoplasmic side.

In terms of assembly, homodimer in cis. Does not appear to form trans-homodimers.

It is found in the cell membrane. Transmembrane protein which can modulate activity of various signaling pathways, probably via binding to integrin ITGAV:ITGB3. Mediates heterophilic cell-cell interactions in vitro. In Xenopus laevis (African clawed frog), this protein is Matrix remodeling-associated protein 8 (mxra8).